A 480-amino-acid polypeptide reads, in one-letter code: Coronin-2B (480 aa).

5 WD repeats span residues 85–125 (GHQG…LKRN), 135–177 (GHSR…KMID), 179–217 (HTDV…VLQE), 220–263 (CKNH…MPMI), and 265–308 (EEID…PYLS). Residues 436 to 479 (NELLRMFFRQQDEIRRLKEELAQKDIRLRQLQLELKNLRNNPKN) adopt a coiled-coil conformation.

This sequence belongs to the WD repeat coronin family. Binds to F-actin and to vinculin.

The protein localises to the cytoplasm. Its subcellular location is the cytoskeleton. In terms of biological role, may play a role in the reorganization of neuronal actin structure. This Mus musculus (Mouse) protein is Coronin-2B (Coro2b).